A 425-amino-acid polypeptide reads, in one-letter code: Dihydroorotase (425 aa).

The Zn(2+) site is built by His-61 and His-63. Residues 63-65 (HLR) and Asn-95 each bind substrate. The Zn(2+) site is built by Asp-153, His-180, and His-233. Residue Asn-279 participates in substrate binding. Asp-306 contributes to the Zn(2+) binding site. Residue Asp-306 is part of the active site. His-310 provides a ligand contact to substrate.

Belongs to the metallo-dependent hydrolases superfamily. DHOase family. Class I DHOase subfamily. It depends on Zn(2+) as a cofactor.

The catalysed reaction is (S)-dihydroorotate + H2O = N-carbamoyl-L-aspartate + H(+). The protein operates within pyrimidine metabolism; UMP biosynthesis via de novo pathway; (S)-dihydroorotate from bicarbonate: step 3/3. In terms of biological role, catalyzes the reversible cyclization of carbamoyl aspartate to dihydroorotate. In Trichlorobacter lovleyi (strain ATCC BAA-1151 / DSM 17278 / SZ) (Geobacter lovleyi), this protein is Dihydroorotase.